Reading from the N-terminus, the 239-residue chain is Calcium load-activated calcium channel (239 aa).

Residues 1-55 are Lumenal-facing; it reads MPRKRKCDLRAVRVGLLLGGGGVYGSRFRFTFPGCRALSPWRVRVQRRRCEMSTM. Residues 56 to 83 traverse the membrane as a helical segment; that stretch reads FADTLLIVFISVCTALLAEGITWVLVYR. A coiled-coil region spans residues 83 to 140; the sequence is RTDKYKRLKAEVEKQSKKLEKKKETITESAGRQQKKKIERQEEKLKNNNRDLSMVRMK. Residues 84–137 are Cytoplasmic-facing; the sequence is TDKYKRLKAEVEKQSKKLEKKKETITESAGRQQKKKIERQEEKLKNNNRDLSMV. Ser-111 carries the phosphoserine modification. A helical transmembrane segment spans residues 138 to 157; sequence RMKSMFAIGFCFTALMGMFN. Residues 158–171 lie on the Lumenal side of the membrane; the sequence is SIFDGRVVAKLPFT. The stretch at 172-181 is an intramembrane region; that stretch reads PLSYIQGLSH. Residues 182-191 lie on the Lumenal side of the membrane; sequence RNLLGDDTTD. A helical membrane pass occupies residues 192–213; that stretch reads CSFIFLYILCTMSIRQNIQKIL. The Cytoplasmic segment spans residues 214-239; that stretch reads GLAPSRAATKQAGGFLGPPPPSGKFS. The residue at position 239 (Ser-239) is a Phosphoserine.

Belongs to the TMCO1 family. Homodimer and homotetramer. Homodimer under resting conditions; forms homotetramers following ER calcium overload. Component of the GET- and EMC-like (GEL) complex, composed of RAB5IF/OPTI and TMCO1. The GEL complex is part of the multi-pass translocon (MPT) complex, composed of three subcomplexes, the GEL complex (composed of RAB5IF/OPTI and TMCO1), the BOS complex (composed of NCLN/Nicalin, NOMO and TMEM147) and the PAT complex (composed of WDR83OS/Asterix and CCDC47). The MPT complex associates with the SEC61 complex. Widely expressed in adult and fetal tissues, with higher levels in thymus, prostate, testis and small intestine and lower levels in brain, placenta, lung and kidney. Present in most tissues in the eye, including the trabecular meshwork and retina (at protein level).

The protein resides in the endoplasmic reticulum membrane. It localises to the golgi apparatus membrane. It is found in the mitochondrion membrane. It carries out the reaction Ca(2+)(in) = Ca(2+)(out). Functionally, endoplasmic reticulum (ER) calcium-selective channel preventing intracellular Ca2(+) stores from overfilling and maintaining calcium homeostasis in the ER. In response to endoplasmic reticulum (ER) Ca2(+) overloading, assembles into a homotetramer, forming a functional calcium-selective channel facilitating Ca2(+) release. Mediates ER Ca2(+) homeostasis in osteoblasts and plays a key role in bone formation, via the CaMKII-HDAC4-RUNX2 signaling axis. Component of the multi-pass translocon (MPT) complex that mediates insertion of multi-pass membrane proteins into the lipid bilayer of membranes. The MPT complex takes over after the SEC61 complex: following membrane insertion of the first few transmembrane segments of proteins by the SEC61 complex, the MPT complex occludes the lateral gate of the SEC61 complex to promote insertion of subsequent transmembrane regions. Within the MPT complex, the GEL subcomplex may mediate insertion of transmembrane regions into the membrane. This Homo sapiens (Human) protein is Calcium load-activated calcium channel.